The following is a 200-amino-acid chain: MGISRDSRHKRSATGAKRAQFRKKRKFELGRQPANTKIGAKRIHSVRTRGGNKKYRALRIETGNFSWASEGISKKTRIAGVVYHPSNNELVRTNTLTKAAIVQIDATPFRQWFEAHYGQTLGKKKNVKEEETVAKSKNAERKWAARAASAKIESSVESQFSAGRLYACISSRPGQSGRCDGYILEGEELAFYLRRLTAKK.

The disordered stretch occupies residues 1–31; that stretch reads MGISRDSRHKRSATGAKRAQFRKKRKFELGR. Residue Thr-62 is modified to Phosphothreonine. 4 positions are modified to phosphoserine: Ser-66, Ser-69, Ser-73, and Ser-86. Phosphothreonine is present on Thr-107. 4 positions are modified to phosphoserine: Ser-154, Ser-155, Ser-158, and Ser-161.

Belongs to the eukaryotic ribosomal protein eS8 family. Component of the small ribosomal subunit (SSU). Mature yeast ribosomes consist of a small (40S) and a large (60S) subunit. The 40S small subunit contains 1 molecule of ribosomal RNA (18S rRNA) and 33 different proteins (encoded by 57 genes). The large 60S subunit contains 3 rRNA molecules (25S, 5.8S and 5S rRNA) and 46 different proteins (encoded by 81 genes).

The protein resides in the cytoplasm. In terms of biological role, component of the ribosome, a large ribonucleoprotein complex responsible for the synthesis of proteins in the cell. The small ribosomal subunit (SSU) binds messenger RNAs (mRNAs) and translates the encoded message by selecting cognate aminoacyl-transfer RNA (tRNA) molecules. The large subunit (LSU) contains the ribosomal catalytic site termed the peptidyl transferase center (PTC), which catalyzes the formation of peptide bonds, thereby polymerizing the amino acids delivered by tRNAs into a polypeptide chain. The nascent polypeptides leave the ribosome through a tunnel in the LSU and interact with protein factors that function in enzymatic processing, targeting, and the membrane insertion of nascent chains at the exit of the ribosomal tunnel. The polypeptide is Small ribosomal subunit protein eS8A (Saccharomyces cerevisiae (strain ATCC 204508 / S288c) (Baker's yeast)).